The sequence spans 635 residues: 1-deoxy-D-xylulose-5-phosphate synthase (635 aa).

Thiamine diphosphate contacts are provided by residues His76 and 117-119 (GHS). Asp148 provides a ligand contact to Mg(2+). Thiamine diphosphate contacts are provided by residues 149 to 150 (GA), Asn177, Tyr294, and Glu379. Asn177 lines the Mg(2+) pocket.

The protein belongs to the transketolase family. DXPS subfamily. As to quaternary structure, homodimer. Requires Mg(2+) as cofactor. Thiamine diphosphate serves as cofactor.

The enzyme catalyses D-glyceraldehyde 3-phosphate + pyruvate + H(+) = 1-deoxy-D-xylulose 5-phosphate + CO2. Its pathway is metabolic intermediate biosynthesis; 1-deoxy-D-xylulose 5-phosphate biosynthesis; 1-deoxy-D-xylulose 5-phosphate from D-glyceraldehyde 3-phosphate and pyruvate: step 1/1. Catalyzes the acyloin condensation reaction between C atoms 2 and 3 of pyruvate and glyceraldehyde 3-phosphate to yield 1-deoxy-D-xylulose-5-phosphate (DXP). In Neisseria meningitidis serogroup C (strain 053442), this protein is 1-deoxy-D-xylulose-5-phosphate synthase.